A 502-amino-acid chain; its full sequence is Mitochondrial fusion and transport protein UGO1 (502 aa).

Met1 bears the N-acetylmethionine mark. Topologically, residues 1–293 (MNNNNVTEAT…VINSPDISKS (293 aa)) are cytoplasmic. The interval 1-294 (MNNNNVTEAT…INSPDISKSF (294 aa)) is binds FZO1. The stretch at 288–383 (PDISKSFILA…NSFFNKLFDL (96 aa)) is one Solcar repeat. The helical; Signal-anchor for type II membrane protein transmembrane segment at 294–314 (FILALGAGVFTSIILLPVDLI) threads the bilayer. The binds MGM1 stretch occupies residues 312-502 (DLIRTRLIVT…VDINMEQEKF (191 aa)). The Mitochondrial intermembrane portion of the chain corresponds to 315–502 (RTRLIVTSFK…VDINMEQEKF (188 aa)).

Interacts with FZO1 through its cytoplasmic domain and with MGM1 through its mitochondrial intermembrane space domain.

It is found in the mitochondrion outer membrane. Required for mitochondrial fusion as well as normal mitochondrial morphology by bridging the essential interaction between FZO1 and MGM1. May coordinate fusion of inner and outer membranes during mitochondrial fusion. The chain is Mitochondrial fusion and transport protein UGO1 from Saccharomyces cerevisiae (strain ATCC 204508 / S288c) (Baker's yeast).